Reading from the N-terminus, the 201-residue chain is Prostamide/prostaglandin F synthase (201 aa).

This sequence belongs to the peroxiredoxin-like PRXL2 family. Prostamide/prostaglandin F synthase subfamily.

The protein localises to the cytoplasm. It localises to the cytosol. The enzyme catalyses prostaglandin H2 + [thioredoxin]-dithiol = prostaglandin F2alpha + [thioredoxin]-disulfide. The catalysed reaction is prostamide F2alpha + [thioredoxin]-disulfide = prostamide H2 + [thioredoxin]-dithiol. Catalyzes the reduction of prostaglandin-ethanolamide H(2) (prostamide H(2)) to prostamide F(2alpha) with NADPH as proton donor. Also able to reduce prostaglandin H(2) to prostaglandin F(2alpha). In Xenopus tropicalis (Western clawed frog), this protein is Prostamide/prostaglandin F synthase (prxl2b).